The primary structure comprises 479 residues: NADH-quinone oxidoreductase subunit N 2 (479 aa).

14 consecutive transmembrane segments (helical) span residues 4-24, 43-63, 67-87, 99-119, 121-141, 159-179, 201-221, 239-259, 267-287, 294-314, 318-338, 364-384, 401-421, and 444-464; these read FVSF…FVVT, GVLV…SGAY, AFSQ…GILS, PEYF…VSSI, VITL…MVAM, IMFG…LYGL, AVTG…VFPF, LIAS…VSLA, ATLL…IALV, LLGF…VAMD, FASA…CFVV, LAVT…FVGF, ALVV…LQIV, and ALCV…AFTI.

It belongs to the complex I subunit 2 family. In terms of assembly, NDH-1 is composed of 14 different subunits. Subunits NuoA, H, J, K, L, M, N constitute the membrane sector of the complex.

It is found in the cell inner membrane. The enzyme catalyses a quinone + NADH + 5 H(+)(in) = a quinol + NAD(+) + 4 H(+)(out). Its function is as follows. NDH-1 shuttles electrons from NADH, via FMN and iron-sulfur (Fe-S) centers, to quinones in the respiratory chain. The immediate electron acceptor for the enzyme in this species is believed to be ubiquinone. Couples the redox reaction to proton translocation (for every two electrons transferred, four hydrogen ions are translocated across the cytoplasmic membrane), and thus conserves the redox energy in a proton gradient. The protein is NADH-quinone oxidoreductase subunit N 2 of Opitutus terrae (strain DSM 11246 / JCM 15787 / PB90-1).